The following is a 426-amino-acid chain: UPF0597 protein CLI_1810 (426 aa).

Belongs to the UPF0597 family.

The chain is UPF0597 protein CLI_1810 from Clostridium botulinum (strain Langeland / NCTC 10281 / Type F).